The primary structure comprises 206 residues: Transmembrane emp24 domain-containing protein bai (206 aa).

The N-terminal stretch at 1 to 20 (MARTLLILCTLMAWAWTGEA) is a signal peptide. Topologically, residues 21–172 (VMFKLTPNTQ…RDTNEKTNSR (152 aa)) are lumenal. The GOLD domain occupies 30-140 (QKCLKEDIQA…LKPLEVDLKR (111 aa)). The chain crosses the membrane as a helical span at residues 173–193 (VLFFSIFSMCCLLGLATWQVL). Over 194 to 206 (YLRRYFKAKKLIE) the chain is Cytoplasmic.

This sequence belongs to the EMP24/GP25L family.

It localises to the membrane. Its function is as follows. Eca and bai are essential, though not redundant, for dorsoventral patterning of the embryo. Specifically required during early embryogenesis for the activity of maternal tkv, while the zygotic tkv is not affected. The polypeptide is Transmembrane emp24 domain-containing protein bai (Drosophila ananassae (Fruit fly)).